Reading from the N-terminus, the 341-residue chain is Paired box protein Pax-9 (341 aa).

Residues 4-130 (AFGEVNQLGG…SSISRILRNK (127 aa)) constitute a DNA-binding region (paired). Positions 7-63 (EVNQLGGVFVNGRPLPNAIRLRIVELAQLGIRPCDISRQLRVSHGCVSKILARYNET) are PAI subdomain. Residues 82–130 (TVVKHIRTYKQRDPGIFAWEIRDRLLADGVCDKYNVPSVSSISRILRNK) are RED subdomain. Residues 168 to 189 (AAAAKVPTPPGVPAIPGSVAMP) form an interaction with KDM5B region.

In terms of assembly, interacts with KDM5B.

The protein localises to the nucleus. In terms of biological role, transcription factor required for normal development of thymus, parathyroid glands, ultimobranchial bodies, teeth, skeletal elements of skull and larynx as well as distal limbs. The chain is Paired box protein Pax-9 (PAX9) from Perodicticus potto edwarsi (Potto).